A 315-amino-acid polypeptide reads, in one-letter code: tRNA-dihydrouridine(16) synthase (315 aa).

Residues 7–9 (PME) and Q68 contribute to the FMN site. The active-site Proton donor is C98. FMN-binding positions include K139, 200 to 202 (NGE), and 224 to 225 (GR).

Belongs to the Dus family. DusC subfamily. Requires FMN as cofactor.

The enzyme catalyses 5,6-dihydrouridine(16) in tRNA + NADP(+) = uridine(16) in tRNA + NADPH + H(+). It catalyses the reaction 5,6-dihydrouridine(16) in tRNA + NAD(+) = uridine(16) in tRNA + NADH + H(+). Catalyzes the synthesis of 5,6-dihydrouridine (D), a modified base found in the D-loop of most tRNAs, via the reduction of the C5-C6 double bond in target uridines. DusC specifically modifies U16 in tRNAs. This chain is tRNA-dihydrouridine(16) synthase, found in Escherichia coli (strain K12).